The chain runs to 2803 residues: Microtubule-associated protein 1A (2803 aa).

Phosphoserine is present on residues S114, S117, S118, S121, and S155. The residue at position 177 (Y177) is a Phosphotyrosine. Disordered stretches follow at residues 302 to 466 (GAVP…DLKP) and 486 to 516 (IDRSRAIRGEKELSSEPQTPPAQKGTVPLPT). Phosphoserine is present on residues S319, S322, and S384. A compositionally biased stretch (basic and acidic residues) spans 335–390 (AKREEVVEEGAKEARSELAKELAKTEKKAKESSEKPPEKPAKPERVKTESSEALKA). The span at 391-406 (EKRKLIKDKVGKKHLK) shows a compositional bias: basic residues. Basic and acidic residues-rich tracts occupy residues 407–464 (EKIS…KPDL) and 486–499 (IDRSRAIRGEKELS). Repeat copies occupy residues 415 to 417 (KKD), 420 to 422 (KKE), 427 to 429 (RKE), 431 to 433 (KKD), 436 to 438 (RKE), 440 to 442 (KKD), 444 to 446 (KKE), and 449 to 451 (RKD). The segment at 415–541 (KKDKEKKEIK…TQDFEEMKRE (127 aa)) is 9 X 3 AA repeats of K-K-[DE]. T504 carries the post-translational modification Phosphothreonine. Phosphoserine is present on residues S526 and S527. Repeat 9 spans residues 539–541 (KRE). 2 stretches are compositionally biased toward basic and acidic residues: residues 539–554 (KREERALLAEQRDTGL) and 585–596 (QEEHVMKEKELV). Disordered stretches follow at residues 539-712 (KREE…KAPE), 734-806 (YIQD…GTPE), 847-1080 (EDQS…VNID), 1109-1548 (TGPI…EKKD), and 1573-1605 (EENHQTQEQESLVQEDKTRKPKMLEEKSPEKVK). Phosphoserine is present on residues S605 and S612. Phosphothreonine is present on T616. Residues 623-667 (WEEKKQREAERLPDRTEAREESEPEVKEDVIEKAELEEMEEVHPS) show a composition bias toward basic and acidic residues. A phosphoserine mark is found at S644, S667, and S787. Polar residues-rich tracts occupy residues 847–860 (EDQSVASLTAPQTE) and 871–883 (TVTSIPSSRTEAT). A phosphoserine mark is found at S874, S877, S878, and S891. Position 894 is a phosphothreonine (T894). S896, S900, S909, S986, S996, S1004, S1013, S1019, and S1029 each carry phosphoserine. Residues 1031-1065 (GDTKRTPGVGKEDAAEETVKPGPEEGTLEKEEKVP) show a composition bias toward basic and acidic residues. Phosphoserine occurs at positions 1069, 1144, 1146, 1160, 1172, 1190, 1200, 1203, 1209, 1218, 1221, and 1264. The segment covering 1131–1146 (KPQKDEVLRYPDRSLS) has biased composition (basic and acidic residues). Residues 1154-1169 (SVLSVPSPDTANQEPT) show a composition bias toward polar residues. Composition is skewed to polar residues over residues 1211–1224 (DVSSKQLSPESLGT) and 1264–1278 (SPPTDGTTRYSAQTD). Residues 1289 to 1299 (PASSFSHSTPS) are compositionally biased toward low complexity. S1326, S1329, S1544, S1600, and S1626 each carry phosphoserine. Composition is skewed to basic and acidic residues over residues 1338–1548 (IAIK…EKKD) and 1586–1605 (QEDKTRKPKMLEEKSPEKVK). Over residues 1632–1642 (RAREQEEKYWR) the composition is skewed to basic and acidic residues. Disordered regions lie at residues 1632 to 1684 (RARE…RYWR), 1713 to 1879 (DGQG…FSWG), and 1892 to 2673 (EGAA…LVNG). Phosphoserine is present on S1654. Positions 1655 to 1666 (PTREEPAGEQKE) are enriched in basic and acidic residues. S1675, S1749, S1762, S1776, S1791, S1797, S1801, S1812, and S1818 each carry phosphoserine. A compositionally biased stretch (pro residues) spans 1852–1867 (LPPAPLSPAPGPPTPA). The span at 1907 to 1929 (KDYRKAEGEREEEGRAEAPDKSS) shows a compositional bias: basic and acidic residues. Phosphoserine is present on S1931. Over residues 1951–1964 (PEQREPTPYPDERS) the composition is skewed to basic and acidic residues. T1957 is subject to Phosphothreonine. Over residues 2019-2033 (SPISPKSLQSDTPTF) the composition is skewed to polar residues. A Phosphoserine modification is found at S2022. Positions 2042–2066 (TVPPRPEPGPSMEPSLTPPAVPPRA) are enriched in pro residues. T2058 bears the Phosphothreonine mark. Phosphoserine is present on residues S2074, S2104, S2106, and S2108. The segment covering 2086–2122 (PDRRSPSPKESGRSHWDDSTSDSELEKGAREQPEKEA) has biased composition (basic and acidic residues). Residues 2175 to 2184 (PAPPQLPSPA) show a composition bias toward pro residues. A phosphoserine mark is found at S2235, S2252, S2256, S2259, and S2260. The span at 2257 to 2268 (EGSSSEATTPVI) shows a compositional bias: polar residues. Positions 2312–2325 (ASLDLALAPAPSLP) are enriched in low complexity. S2449 carries the phosphoserine modification. Over residues 2461-2473 (IDDRDLSTEEVRL) the composition is skewed to basic and acidic residues. A compositionally biased stretch (low complexity) spans 2502–2514 (SASDSGSSQSDSD). The span at 2559-2575 (DPPPLPQPDPRPSPPRP) shows a compositional bias: pro residues. Residues 2590-2602 (GRVERLREKEKVQ) are compositionally biased toward basic and acidic residues. 2 positions are modified to phosphoserine: S2649 and S2664.

It belongs to the MAP1 family. As to quaternary structure, 3 different light chains, LC1 (a cleavage product of MAP1B), LC2 (a cleavage product of MAP1A) and LC3 (produced by one of the MAP1LC3 genes), can associate with the MAP1A or MAP1B heavy chains. Interacts with TIAM2. Interacts with guanylate kinase-like domain of DLG1, DLG2 and DLG4. Binds to CSNK1D. Interacts with ELAVL4. Post-translationally, phosphorylated by CSNK1D. In terms of processing, LC2 is generated from MAP1A by proteolytic processing. In terms of tissue distribution, brain.

The protein resides in the cytoplasm. Its subcellular location is the cytoskeleton. Structural protein involved in the filamentous cross-bridging between microtubules and other skeletal elements. In Homo sapiens (Human), this protein is Microtubule-associated protein 1A (MAP1A).